The primary structure comprises 167 residues: Phosphopantetheine adenylyltransferase (167 aa).

Ser-10 contributes to the substrate binding site. ATP-binding positions include 10–11 (SF) and His-18. The substrate site is built by Lys-42, Ala-79, and Arg-93. ATP contacts are provided by residues 94-96 (GLR), Glu-104, and 129-135 (VRHITAT).

It belongs to the bacterial CoaD family. As to quaternary structure, homohexamer. The cofactor is Mg(2+).

Its subcellular location is the cytoplasm. The catalysed reaction is (R)-4'-phosphopantetheine + ATP + H(+) = 3'-dephospho-CoA + diphosphate. The protein operates within cofactor biosynthesis; coenzyme A biosynthesis; CoA from (R)-pantothenate: step 4/5. Reversibly transfers an adenylyl group from ATP to 4'-phosphopantetheine, yielding dephospho-CoA (dPCoA) and pyrophosphate. In Beijerinckia indica subsp. indica (strain ATCC 9039 / DSM 1715 / NCIMB 8712), this protein is Phosphopantetheine adenylyltransferase.